Reading from the N-terminus, the 373-residue chain is Anhydro-N-acetylmuramic acid kinase (373 aa).

12–19 (GTSLDGVD) lines the ATP pocket.

It belongs to the anhydro-N-acetylmuramic acid kinase family.

The enzyme catalyses 1,6-anhydro-N-acetyl-beta-muramate + ATP + H2O = N-acetyl-D-muramate 6-phosphate + ADP + H(+). It participates in amino-sugar metabolism; 1,6-anhydro-N-acetylmuramate degradation. The protein operates within cell wall biogenesis; peptidoglycan recycling. Functionally, catalyzes the specific phosphorylation of 1,6-anhydro-N-acetylmuramic acid (anhMurNAc) with the simultaneous cleavage of the 1,6-anhydro ring, generating MurNAc-6-P. Is required for the utilization of anhMurNAc either imported from the medium or derived from its own cell wall murein, and thus plays a role in cell wall recycling. This Serratia proteamaculans (strain 568) protein is Anhydro-N-acetylmuramic acid kinase.